The primary structure comprises 154 residues: Protein phosphatase 1 regulatory subunit 27 (154 aa).

ANK repeat units follow at residues S63 to Q92 and T96 to A125.

Interacts with DYSF and PPP1CA.

Functionally, inhibits phosphatase activity of protein phosphatase 1 (PP1) complexes. The chain is Protein phosphatase 1 regulatory subunit 27 (Ppp1r27) from Mus musculus (Mouse).